A 260-amino-acid polypeptide reads, in one-letter code: Proliferating cell nuclear antigen (260 aa).

Residues 61–80 (RCDRNLSMGMNLGSMAKILK) mediate DNA binding.

It belongs to the PCNA family. As to quaternary structure, homotrimer. Forms a complex with activator 1 heteropentamer in the presence of ATP. Interacts with E2f. Interacts with the catalytic subunits of two DNA polymerase complexes: PolD1 from the delta complex and PolE1/DNApol-epsilon255 from the epsilon complex. As to expression, expressed at high levels in adult ovary.

Its subcellular location is the nucleus. It is found in the chromosome. The protein resides in the cytoplasm. Likely to be an auxiliary protein of DNA polymerase delta complex and is probably involved in the control of DNA replication and repair by increasing the polymerase's processibility. The sequence is that of Proliferating cell nuclear antigen from Drosophila melanogaster (Fruit fly).